A 258-amino-acid polypeptide reads, in one-letter code: Probable pectin methylesterase CGR3 (258 aa).

Over 1-29 (MSRRQVRRVGDSGSFPFVGALHSKSRSSP) the chain is Cytoplasmic. The helical transmembrane segment at 30 to 50 (LLSVCLVLVGACLLIGYAYSG) threads the bilayer. The Lumenal segment spans residues 51–258 (PGMFKSIREV…CQVFHLKPLH (208 aa)). Asn-171 carries an N-linked (GlcNAc...) asparagine glycan.

The protein belongs to the class I-like SAM-binding methyltransferase superfamily.

The protein localises to the golgi apparatus membrane. In terms of biological role, together with CGR2, required for homogalacturonan pectins (HG) methylesterification in the Golgi apparatus prior to integration into cell walls, essential for general growth and development. Promotes petiole elongation. Impacts photosynthesis and respiration efficiency by influencing leaf mesophyll morphology and physiology; pectin methylesterification modulates both expansion and positioning of cells in leaves, probably by changing cell walls plasticity. The sequence is that of Probable pectin methylesterase CGR3 from Arabidopsis thaliana (Mouse-ear cress).